The chain runs to 682 residues: 1,4-alpha-glucan-branching enzyme (682 aa).

2 residues coordinate (1,4-alpha-D-glucosyl)n: Trp88 and Lys124. Residue Asp342 is the Nucleophile of the active site. Glu397 (proton donor) is an active-site residue.

Belongs to the glycosyl hydrolase 13 family. GlgB subfamily.

The protein resides in the cytoplasm. The enzyme catalyses Transfers a segment of a (1-&gt;4)-alpha-D-glucan chain to a primary hydroxy group in a similar glucan chain.. It participates in glycan biosynthesis; glycogen biosynthesis. Its function is as follows. Glycogen-branching enzyme participates in the glycogen biosynthetic process along with glycogenin and glycogen synthase. Generates alpha-1,6-glucosidic branches from alpha-1,4-linked glucose chains, to increase solubility of the glycogen polymer. The polypeptide is 1,4-alpha-glucan-branching enzyme (GLC3) (Cryptococcus neoformans var. neoformans serotype D (strain B-3501A) (Filobasidiella neoformans)).